Reading from the N-terminus, the 113-residue chain is Insulin-like peptide 02 (113 aa).

A signal peptide spans 1 to 22 (MFYLTFLLFGAICIGQIQLGQP). A propeptide spanning residues 23-42 (VKFKVNEDGHRPSVYPIKYR) is cleaved from the precursor. 3 cysteine pairs are disulfide-bonded: C44–C99, C56–C112, and C98–C103. The propeptide at 62-87 (RRKRSIEADIITDKDTANSYFNRVKR) is c peptide.

This sequence belongs to the insulin family.

It localises to the secreted. Functionally, insulin decreases blood glucose concentration. May have evolved to activate insulin receptors (INSR) in vertebrates. Molecular docking studies reveals unique interaction with the human insulin receptor. In vivo, insulin-like peptide injection reduces blood glucose levels in two models of zebrafish diabetes (streptozotocin- and glucose-induced). Also shorter swimming distance of zebrafish larvae, an effect which is not observed with human insulin. The sequence is that of Insulin-like peptide 02 from Exaiptasia diaphana (Tropical sea anemone).